Here is a 291-residue protein sequence, read N- to C-terminus: 4-diphosphocytidyl-2-C-methyl-D-erythritol kinase (291 aa).

Lys14 is an active-site residue. 96 to 106 (PFGAGLGGGSS) is an ATP binding site. Asp138 is a catalytic residue.

Belongs to the GHMP kinase family. IspE subfamily.

The catalysed reaction is 4-CDP-2-C-methyl-D-erythritol + ATP = 4-CDP-2-C-methyl-D-erythritol 2-phosphate + ADP + H(+). It participates in isoprenoid biosynthesis; isopentenyl diphosphate biosynthesis via DXP pathway; isopentenyl diphosphate from 1-deoxy-D-xylulose 5-phosphate: step 3/6. In terms of biological role, catalyzes the phosphorylation of the position 2 hydroxy group of 4-diphosphocytidyl-2C-methyl-D-erythritol. The sequence is that of 4-diphosphocytidyl-2-C-methyl-D-erythritol kinase from Chlorobium phaeovibrioides (strain DSM 265 / 1930) (Prosthecochloris vibrioformis (strain DSM 265)).